Reading from the N-terminus, the 202-residue chain is Na(+)-translocating NADH-quinone reductase subunit E (202 aa).

6 helical membrane passes run 11–31 (SVFI…FIAI), 35–55 (VETA…TVPA), 81–101 (FLGF…LEML), 114–134 (GIYL…LFMV), 144–164 (VVYG…LAGI), and 180–200 (LGIA…FSGI).

It belongs to the NqrDE/RnfAE family. In terms of assembly, composed of six subunits; NqrA, NqrB, NqrC, NqrD, NqrE and NqrF.

It localises to the cell inner membrane. The catalysed reaction is a ubiquinone + n Na(+)(in) + NADH + H(+) = a ubiquinol + n Na(+)(out) + NAD(+). NQR complex catalyzes the reduction of ubiquinone-1 to ubiquinol by two successive reactions, coupled with the transport of Na(+) ions from the cytoplasm to the periplasm. NqrA to NqrE are probably involved in the second step, the conversion of ubisemiquinone to ubiquinol. The protein is Na(+)-translocating NADH-quinone reductase subunit E of Azotobacter vinelandii (strain DJ / ATCC BAA-1303).